Consider the following 66-residue polypeptide: GMGLANLLYAPVLLLLRNVGLLTRSRSERDVLLDEPPQGLYDAVRLRERPVSGQDGEPRSPPGPFD.

A helical membrane pass occupies residues 1 to 15; the sequence is GMGLANLLYAPVLLL. At 16–66 the chain is on the cytoplasmic side; sequence LRNVGLLTRSRSERDVLLDEPPQGLYDAVRLRERPVSGQDGEPRSPPGPFD. The disordered stretch occupies residues 43–66; that stretch reads AVRLRERPVSGQDGEPRSPPGPFD.

Belongs to the major facilitator superfamily. Vesicular transporter family. In terms of assembly, interacts with SEC14L1.

The protein localises to the cytoplasmic vesicle. The protein resides in the secretory vesicle. It is found in the synaptic vesicle membrane. The enzyme catalyses acetylcholine(out) + 2 H(+)(in) = acetylcholine(in) + 2 H(+)(out). It carries out the reaction choline(in) + 2 H(+)(out) = choline(out) + 2 H(+)(in). It catalyses the reaction serotonin(in) + 2 H(+)(out) = serotonin(out) + 2 H(+)(in). Electrogenic antiporter that exchanges one cholinergic neurotransmitter, acetylcholine or choline, with two intravesicular protons across the membrane of synaptic vesicles. Uses the electrochemical proton gradient established by the V-type proton-pump ATPase to store neurotransmitters inside the vesicles prior to their release via exocytosis. Determines cholinergic vesicular quantal size at presynaptic nerve terminals in developing neuro-muscular junctions with an impact on motor neuron differentiation and innervation pattern. Part of forebrain cholinergic system, regulates hippocampal synapse transmissions that underlie spatial memory formation. Can transport serotonin. The sequence is that of Vesicular acetylcholine transporter (SLC18A3) from Macaca fuscata fuscata (Japanese macaque).